The primary structure comprises 298 residues: ATP synthase gamma chain (298 aa).

The protein belongs to the ATPase gamma chain family. In terms of assembly, F-type ATPases have 2 components, CF(1) - the catalytic core - and CF(0) - the membrane proton channel. CF(1) has five subunits: alpha(3), beta(3), gamma(1), delta(1), epsilon(1). CF(0) has three main subunits: a, b and c.

It localises to the cell inner membrane. Functionally, produces ATP from ADP in the presence of a proton gradient across the membrane. The gamma chain is believed to be important in regulating ATPase activity and the flow of protons through the CF(0) complex. The polypeptide is ATP synthase gamma chain (Granulibacter bethesdensis (strain ATCC BAA-1260 / CGDNIH1)).